A 141-amino-acid polypeptide reads, in one-letter code: Large ribosomal subunit protein uL11 (141 aa).

It belongs to the universal ribosomal protein uL11 family. In terms of assembly, part of the ribosomal stalk of the 50S ribosomal subunit. Interacts with L10 and the large rRNA to form the base of the stalk. L10 forms an elongated spine to which L12 dimers bind in a sequential fashion forming a multimeric L10(L12)X complex. One or more lysine residues are methylated.

In terms of biological role, forms part of the ribosomal stalk which helps the ribosome interact with GTP-bound translation factors. This is Large ribosomal subunit protein uL11 from Helicobacter pylori (strain P12).